The following is a 373-amino-acid chain: Queuine tRNA-ribosyltransferase (373 aa).

Catalysis depends on aspartate 90, which acts as the Proton acceptor. Residues aspartate 90 to phenylalanine 94, aspartate 144, glutamine 193, and glycine 220 contribute to the substrate site. Residues glycine 251–aspartate 257 form an RNA binding region. Aspartate 270 (nucleophile) is an active-site residue. The RNA binding; important for wobble base 34 recognition stretch occupies residues threonine 275–arginine 279. Zn(2+) contacts are provided by cysteine 308, cysteine 310, cysteine 313, and histidine 339.

The protein belongs to the queuine tRNA-ribosyltransferase family. As to quaternary structure, homodimer. Within each dimer, one monomer is responsible for RNA recognition and catalysis, while the other monomer binds to the replacement base PreQ1. Zn(2+) is required as a cofactor.

The enzyme catalyses 7-aminomethyl-7-carbaguanine + guanosine(34) in tRNA = 7-aminomethyl-7-carbaguanosine(34) in tRNA + guanine. The protein operates within tRNA modification; tRNA-queuosine biosynthesis. Functionally, catalyzes the base-exchange of a guanine (G) residue with the queuine precursor 7-aminomethyl-7-deazaguanine (PreQ1) at position 34 (anticodon wobble position) in tRNAs with GU(N) anticodons (tRNA-Asp, -Asn, -His and -Tyr). Catalysis occurs through a double-displacement mechanism. The nucleophile active site attacks the C1' of nucleotide 34 to detach the guanine base from the RNA, forming a covalent enzyme-RNA intermediate. The proton acceptor active site deprotonates the incoming PreQ1, allowing a nucleophilic attack on the C1' of the ribose to form the product. After dissociation, two additional enzymatic reactions on the tRNA convert PreQ1 to queuine (Q), resulting in the hypermodified nucleoside queuosine (7-(((4,5-cis-dihydroxy-2-cyclopenten-1-yl)amino)methyl)-7-deazaguanosine). This is Queuine tRNA-ribosyltransferase from Campylobacter jejuni subsp. doylei (strain ATCC BAA-1458 / RM4099 / 269.97).